A 176-amino-acid chain; its full sequence is MSGRINVVQGDITRIDTDVIVNAANPSLMGGGGVDGAIHRAAGPSLLAACKVVRQQQGECQPGHAVITEAGDLAAKAVIHTVGPIWRGGHDNEPQLLADAYRNSLELVTANGYNSVAFPAISTGIYGYPKAAAAQIAFETVSDYLTRRPQPKQVYFVCYDEENFLLYQRLLGQYDE.

Positions 1–175 (MSGRINVVQG…LYQRLLGQYD (175 aa)) constitute a Macro domain. Residues 11-12 (DI), N25, 33-35 (GVD), and 122-126 (STGIY) contribute to the substrate site. D35 serves as the catalytic Proton acceptor.

It belongs to the MacroD-type family. YmdB subfamily. Homodimer. Interacts with RNase III.

It catalyses the reaction 3''-O-acetyl-ADP-D-ribose + H2O = ADP-D-ribose + acetate + H(+). The enzyme catalyses 2''-O-acetyl-ADP-D-ribose + H2O = ADP-D-ribose + acetate + H(+). In terms of biological role, deacetylates O-acetyl-ADP ribose to yield ADP-ribose and free acetate. Down-regulates ribonuclease 3 (RNase III) activity. Acts by interacting directly with the region of the ribonuclease that is required for dimerization/activation. The chain is O-acetyl-ADP-ribose deacetylase from Cronobacter turicensis (strain DSM 18703 / CCUG 55852 / LMG 23827 / z3032).